The following is a 1962-amino-acid chain: Myosin heavy chain, muscle (1962 aa).

Residues 33–82 enclose the Myosin N-terminal SH3-like domain; that stretch reads DSKKSCWIPDEKEGYLLGEIKATKGDIVSVGLQGGEVRDIKSEKVEKVNP. Positions 86-777 constitute a Myosin motor domain; it reads EKIEDMADMT…VLGQMEEFRD (692 aa). 179-186 contacts ATP; that stretch reads GESGAGKT. The tract at residues 656 to 678 is actin-binding; it reads LNSLMTTLRSTQPHFVRCIIPNE. Residues 780–809 enclose the IQ domain; that stretch reads LGKIMSWMQAWARGYLSRKGFKKLQEQRVA. A coiled-coil region spans residues 802 to 1927; that stretch reads KLQEQRVALK…KFRAKGRAGS (1126 aa). Disordered regions lie at residues 1822-1862 and 1922-1962; these read ENEL…NHER and KGRA…ENEF.

Belongs to the TRAFAC class myosin-kinesin ATPase superfamily. Myosin family. Muscle myosin is a hexameric protein that consists of 2 heavy chain subunits (MHC), 2 alkali light chain subunits (MLC) and 2 regulatory light chain subunits (MLC-2). As to expression, expressed in larval and adult muscles. Isoforms containing exon 9a are expressed in indirect flight muscles, exons 9a and 9b are expressed in jump muscles, exons 9b and 9c are expressed in other larval and adult muscles.

It is found in the cytoplasm. The protein resides in the myofibril. Functionally, muscle contraction. In Drosophila melanogaster (Fruit fly), this protein is Myosin heavy chain, muscle (Mhc).